The primary structure comprises 184 residues: NADH-quinone oxidoreductase subunit B (184 aa).

Residues cysteine 37, cysteine 38, cysteine 103, and cysteine 132 each coordinate [4Fe-4S] cluster.

Belongs to the complex I 20 kDa subunit family. In terms of assembly, NDH-1 is composed of 14 different subunits. Subunits NuoB, C, D, E, F, and G constitute the peripheral sector of the complex. The cofactor is [4Fe-4S] cluster.

It localises to the cell membrane. It carries out the reaction a quinone + NADH + 5 H(+)(in) = a quinol + NAD(+) + 4 H(+)(out). In terms of biological role, NDH-1 shuttles electrons from NADH, via FMN and iron-sulfur (Fe-S) centers, to quinones in the respiratory chain. The immediate electron acceptor for the enzyme in this species is believed to be a menaquinone. Couples the redox reaction to proton translocation (for every two electrons transferred, four hydrogen ions are translocated across the cytoplasmic membrane), and thus conserves the redox energy in a proton gradient. The chain is NADH-quinone oxidoreductase subunit B from Mycobacterium bovis (strain BCG / Pasteur 1173P2).